A 228-amino-acid chain; its full sequence is Protein ULTRAPETALA 2 (228 aa).

In terms of domain architecture, SAND spans 14–121 (EELQEISGVH…NKALKNSNVS (108 aa)).

Expressed in influorescence, pollen and siliques, with a higher expression in influorescence.

Its subcellular location is the cytoplasm. It is found in the nucleus. Its function is as follows. Putative transcription factor that acts as a key negative regulator of cell accumulation in shoot and floral meristems. Negatively regulates the size of the WUSCHEL (WUS)-expressing organizing center in inflorescence meristems. May act by down-regulating expression of WUS. Can compensate for mutant ULT1 protein when overexpressed. This Arabidopsis thaliana (Mouse-ear cress) protein is Protein ULTRAPETALA 2 (ULT2).